Reading from the N-terminus, the 396-residue chain is Probable sugar efflux transporter (396 aa).

12 consecutive transmembrane segments (helical) span residues 15-35 (VVTL…PVGL), 50-70 (VGIM…PFML), 81-101 (LICL…AWNF), 103-123 (VLVI…SITA), 136-156 (AQAL…GLPI), 169-189 (TFFA…KLLP), 209-229 (PALM…YTAY), 246-266 (FATV…LVFG), 275-295 (SLVS…LPAA), 301-321 (LAIL…GMQV), 333-353 (VAMA…ALVG), and 364-384 (AIGY…VLIF).

The protein belongs to the major facilitator superfamily. SotB (TC 2.A.1.2) family.

It is found in the cell inner membrane. Functionally, involved in the efflux of sugars. The physiological role may be the reduction of the intracellular concentration of toxic sugars or sugar metabolites. In Salmonella schwarzengrund (strain CVM19633), this protein is Probable sugar efflux transporter.